Consider the following 983-residue polypeptide: Poly [ADP-ribose] polymerase 1 (983 aa).

2 PARP-type zinc fingers span residues Trp-8–Ala-91 and Tyr-114–Leu-194. 8 residues coordinate Zn(2+): Cys-20, Cys-23, His-52, Cys-55, Cys-126, Cys-129, His-156, and Cys-159. A disordered region spans residues Ala-197–Glu-246. Residues Arg-215–Lys-226 are compositionally biased toward basic and acidic residues. A PADR1 zinc-binding domain is found at Thr-236–Pro-375. Residues Gly-301–Lys-345 form a zinc ribbon region. Residues Cys-306, Cys-309, Cys-322, and Cys-332 each contribute to the Zn(2+) site. Residues Pro-369–Glu-397 are disordered. Positions Gly-379 to Lys-388 are enriched in polar residues. A BRCT domain is found at Ser-394–Ile-484. The region spanning His-511–Phe-611 is the WGR domain. One can recognise a PARP alpha-helical domain in the interval Ser-633–Gly-751. The 226-residue stretch at Glu-758–Arg-983 folds into the PARP catalytic domain.

It belongs to the ARTD/PARP family.

Its subcellular location is the nucleus. It carries out the reaction NAD(+) + (ADP-D-ribosyl)n-acceptor = nicotinamide + (ADP-D-ribosyl)n+1-acceptor + H(+).. The catalysed reaction is L-aspartyl-[protein] + NAD(+) = 4-O-(ADP-D-ribosyl)-L-aspartyl-[protein] + nicotinamide. The enzyme catalyses L-glutamyl-[protein] + NAD(+) = 5-O-(ADP-D-ribosyl)-L-glutamyl-[protein] + nicotinamide. In terms of biological role, involved in the base excision repair (BER) pathway, by catalyzing the poly(ADP-ribosyl)ation of a limited number of acceptor proteins involved in chromatin architecture and in DNA metabolism. This modification follows DNA damages and appears as an obligatory step in a detection/signaling pathway leading to the reparation of DNA strand breaks. This is Poly [ADP-ribose] polymerase 1 (PARP1) from Arabidopsis thaliana (Mouse-ear cress).